The chain runs to 107 residues: Phosphoribosyl-ATP pyrophosphatase (107 aa).

It belongs to the PRA-PH family.

It localises to the cytoplasm. The enzyme catalyses 1-(5-phospho-beta-D-ribosyl)-ATP + H2O = 1-(5-phospho-beta-D-ribosyl)-5'-AMP + diphosphate + H(+). The protein operates within amino-acid biosynthesis; L-histidine biosynthesis; L-histidine from 5-phospho-alpha-D-ribose 1-diphosphate: step 2/9. The polypeptide is Phosphoribosyl-ATP pyrophosphatase (hisE) (Rhizobium meliloti (strain 1021) (Ensifer meliloti)).